Consider the following 503-residue polypeptide: Probable cytosol aminopeptidase (503 aa).

Positions 274 and 279 each coordinate Mn(2+). Residue lysine 286 is part of the active site. The Mn(2+) site is built by aspartate 297, aspartate 356, and glutamate 358. Residue arginine 360 is part of the active site.

It belongs to the peptidase M17 family. The cofactor is Mn(2+).

It is found in the cytoplasm. The enzyme catalyses Release of an N-terminal amino acid, Xaa-|-Yaa-, in which Xaa is preferably Leu, but may be other amino acids including Pro although not Arg or Lys, and Yaa may be Pro. Amino acid amides and methyl esters are also readily hydrolyzed, but rates on arylamides are exceedingly low.. It catalyses the reaction Release of an N-terminal amino acid, preferentially leucine, but not glutamic or aspartic acids.. Its function is as follows. Presumably involved in the processing and regular turnover of intracellular proteins. Catalyzes the removal of unsubstituted N-terminal amino acids from various peptides. The protein is Probable cytosol aminopeptidase of Burkholderia orbicola (strain AU 1054).